The chain runs to 460 residues: Ammonium transporter Rh type C (460 aa).

Residues 1 to 9 (MVWNTNLRW) lie on the Cytoplasmic side of the membrane. Residues 10–30 (RLPVTCLLLQVALVVLFGVFV) form a helical membrane-spanning segment. Topologically, residues 31 to 61 (RYDMDADPHWIDKKEAENSTSDMENEFYYRY) are extracellular. Residue asparagine 48 is glycosylated (N-linked (GlcNAc...) asparagine). Residues 62-82 (PSFQDVHVMIFVGFGFLMTFL) traverse the membrane as a helical segment. At 83–90 (QRYGYSSV) the chain is on the cytoplasmic side. The chain crosses the membrane as a helical span at residues 91 to 111 (GFNFLLAAFGIQWALLLQGWF). Topologically, residues 112-125 (HSYYRGYIRVGVEN) are extracellular. Residues 126-145 (LINADFCVGSVCVAFGAVLG) traverse the membrane as a helical segment. Topologically, residues 146–151 (KVSPVQ) are cytoplasmic. A helical transmembrane segment spans residues 152 to 174 (LLIMTLFQVTLFSVNEFILLNLL). Over 175–179 (EVKDA) the chain is Extracellular. A helical transmembrane segment spans residues 180 to 200 (GGSMTIHTFGAYFGLTVTWIL). Over 201-219 (YRPGLHQSKERQSSVYHSD) the chain is Cytoplasmic. The chain crosses the membrane as a helical span at residues 220-240 (LFAMIGTLFLWMYWPSFNSAV). At 241 to 251 (SNHGDAQHRAA) the chain is on the extracellular side. A helical transmembrane segment spans residues 252–272 (INTYCSLAACVLTSVALSSAL). At 273–285 (HKKGKLDMVHIQN) the chain is on the cytoplasmic side. Residues 286–306 (ATLAGGVAVGTAAEMMLMPYG) traverse the membrane as a helical segment. Residue serine 307 is a topological domain, extracellular. Residues 308-328 (LIVGFICGIVSTLGFVYLTPF) traverse the membrane as a helical segment. Residues 329-339 (LESRLRVQDTC) are Cytoplasmic-facing. Residues 340-360 (GIHNLHGIPGIIGAIVGAVTA) form a helical membrane-spanning segment. The Extracellular segment spans residues 361–396 (SCANTDVYGVNGLTQAFGFDGFKTNRTPSMQGKFQA). Residues 397 to 417 (AGLFVSLAMALVGGIIVGIIL) traverse the membrane as a helical segment. Topologically, residues 418-460 (KLPFWGQPADENCFEDAIYWEMPEEPKSTVLHPEDSTLKPSEP) are cytoplasmic.

This sequence belongs to the ammonium transporter (TC 2.A.49) family. Rh subfamily. Homotrimer. In terms of processing, N-glycosylated.

Its subcellular location is the apical cell membrane. It carries out the reaction NH4(+)(in) = NH4(+)(out). It catalyses the reaction methylamine(out) = methylamine(in). The catalysed reaction is CO2(out) = CO2(in). In terms of biological role, ammonium transporter involved in the maintenance of acid-base homeostasis. Transports ammonium and its related derivative methylammonium across the plasma membrane of epithelial cells likely contributing to renal transepithelial ammonia transport and ammonia metabolism. Postulated to primarily mediate an electroneutral bidirectional transport of NH3 ammonia species according to a mechanism that implies interaction of an NH4(+) ion with acidic residues of the pore entry followed by dissociation of NH4(+) into NH3 and H(+). As a result NH3 transits through the central pore and is protonated on the extracellular side reforming NH4(+). May act as a CO2 channel providing for renal acid secretion. The sequence is that of Ammonium transporter Rh type C (RHCG) from Canis lupus familiaris (Dog).